Consider the following 300-residue polypeptide: Transcription factor DUO1 (300 aa).

HTH myb-type domains are found at residues 8–64 (KEEI…RPNL) and 65–116 (KNGC…KRLA). DNA-binding regions (H-T-H motif) lie at residues 36–60 (WSSI…VNKL) and 89–112 (WARI…SSRQ). Low complexity predominate over residues 123–135 (SDASSSSFNPKSS). The disordered stretch occupies residues 123–145 (SDASSSSFNPKSSSSHRLKGKNV). Positions 136–145 (SSHRLKGKNV) are enriched in basic residues.

As to expression, confined to inflorescences, especially in stamens and pollen.

It is found in the nucleus. Functionally, transcription activator that acts as a positive regulator of male germline development by promoting both gametic cell specification and cell cycle progression. Binds to canonical MYB sites 5'-AACCGTC-3', 5'-AAACCGC-3' and 5'-AACCGT-3' in promoters to trigger the expression of male germline-specific or enriched genes (e.g. MGH3, GEX2 and GCS1), including those required for fertilization. Required for sperm cell specification leading to pollen maturation by activating a germline-specific regulon. Involved in pollen mitosis entry at G2-M transition via the regulation of CYCB1-1, DAZ1 and DAZ2 expression. The sequence is that of Transcription factor DUO1 from Arabidopsis thaliana (Mouse-ear cress).